The primary structure comprises 214 residues: External core antigen (214 aa).

A signal peptide spans 1-19; sequence MQLFHLCLIISCTCPTFQA. The tract at residues 25 to 27 is HBEAG; that stretch reads GWL. The tract at residues 165 to 214 is disordered; it reads NAPILSTLPETTVVRRRDRGRSPRRRTPSPRRRRSQSPRRRRSQSRESQC. Basic residues predominate over residues 178-207; that stretch reads VRRRDRGRSPRRRTPSPRRRRSQSPRRRRS. The stretch at 186 to 192 is one 1; half-length repeat; sequence SPRRRTP. The tract at residues 186 to 208 is 3 X 8 AA repeats of S-P-R-R-R-R-S-Q; sequence SPRRRTPSPRRRRSQSPRRRRSQ. The propeptide occupies 186–214; it reads SPRRRTPSPRRRRSQSPRRRRSQSRESQC. Repeat copies occupy residues 193-200 and 201-208.

This sequence belongs to the orthohepadnavirus precore antigen family. In terms of assembly, homodimerizes. Post-translationally, phosphorylated. Cleaved by host furin.

Its subcellular location is the secreted. It is found in the host nucleus. May regulate immune response to the intracellular capsid in acting as a T-cell tolerogen, by having an immunoregulatory effect which prevents destruction of infected cells by cytotoxic T-cells. This immune regulation may predispose to chronicity during perinatal infections and prevent severe liver injury during adult infections. In Homo sapiens (Human), this protein is External core antigen.